We begin with the raw amino-acid sequence, 118 residues long: UPF0212 protein HQ_2663A (118 aa).

Belongs to the UPF0212 family.

The chain is UPF0212 protein HQ_2663A from Haloquadratum walsbyi (strain DSM 16790 / HBSQ001).